Reading from the N-terminus, the 546-residue chain is CTP synthase (546 aa).

Residues 1–266 (MTTRYIFVTG…DQLVTKRFGI (266 aa)) are amidoligase domain. S14 contacts CTP. S14 provides a ligand contact to UTP. Residues 15-20 (SLGKGI) and D72 each bind ATP. Mg(2+) contacts are provided by D72 and E140. CTP-binding positions include 147-149 (DIE), 187-192 (KTKPTQ), and K223. UTP contacts are provided by residues 187–192 (KTKPTQ) and K223. 239–241 (KDV) lines the ATP pocket. One can recognise a Glutamine amidotransferase type-1 domain in the interval 291–542 (TIGMVGKYIE…VAAAYTYQKR (252 aa)). L-glutamine is bound at residue G352. Catalysis depends on C379, which acts as the Nucleophile; for glutamine hydrolysis. L-glutamine is bound by residues 380 to 383 (LGMQ), E403, and R470. Active-site residues include H515 and E517.

Belongs to the CTP synthase family. In terms of assembly, homotetramer.

The enzyme catalyses UTP + L-glutamine + ATP + H2O = CTP + L-glutamate + ADP + phosphate + 2 H(+). It catalyses the reaction L-glutamine + H2O = L-glutamate + NH4(+). The catalysed reaction is UTP + NH4(+) + ATP = CTP + ADP + phosphate + 2 H(+). Its pathway is pyrimidine metabolism; CTP biosynthesis via de novo pathway; CTP from UDP: step 2/2. Allosterically activated by GTP, when glutamine is the substrate; GTP has no effect on the reaction when ammonia is the substrate. The allosteric effector GTP functions by stabilizing the protein conformation that binds the tetrahedral intermediate(s) formed during glutamine hydrolysis. Inhibited by the product CTP, via allosteric rather than competitive inhibition. Functionally, catalyzes the ATP-dependent amination of UTP to CTP with either L-glutamine or ammonia as the source of nitrogen. Regulates intracellular CTP levels through interactions with the four ribonucleotide triphosphates. The chain is CTP synthase from Shewanella halifaxensis (strain HAW-EB4).